Reading from the N-terminus, the 221-residue chain is Ependymin (221 aa).

The N-terminal stretch at 1-21 is a signal peptide; that stretch reads MQAFAVAALSIWLCLGATTLA. N-linked (GlcNAc...) asparagine glycans are attached at residues asparagine 37, asparagine 77, and asparagine 101.

The protein belongs to the ependymin family. As to quaternary structure, forms disulfide-linked dimers. In terms of processing, binds calcium through the terminal sialic acids. In terms of tissue distribution, EPDs are synthesized in the meninx and secreted in the cerebrospinal fluid.

It localises to the secreted. In terms of biological role, may play a role in neural plasticity. May be involved during axon regeneration. This Esox lucius (Northern pike) protein is Ependymin (epd).